Here is a 314-residue protein sequence, read N- to C-terminus: MIEFEKPNIHNIEEDARYGKFVVEPLERGYGTTLGNSLRRILLSSLPGAAVNTVQIDGVVHEFSTVDGVVEDVTQIILNLKKVVLAIDSDDERSLEIDIQGPADVTAADLQGGADVEVLNPDLHIATVAAGKSLHMTVTAVKGRGYTSADENKKLRDEMPIGVLAVDSIYTPIERVNYQVENTRIGARDDYDKLTFDIWTNGSIKPSDALSLGAKILAEHLGLFMDISPVAAEASVMVEAEPVAASASDSAPIEDLDLSVRSYNCLKRAGINTIVELTDRTEADMMKVRNLGRKSLDEIQEKLTDMNLGFRKED.

The tract at residues 1 to 228 (MIEFEKPNIH…EHLGLFMDIS (228 aa)) is alpha N-terminal domain (alpha-NTD). Residues 242–314 (PVAASASDSA…DMNLGFRKED (73 aa)) are alpha C-terminal domain (alpha-CTD).

The protein belongs to the RNA polymerase alpha chain family. Homodimer. The RNAP catalytic core consists of 2 alpha, 1 beta, 1 beta' and 1 omega subunit. When a sigma factor is associated with the core the holoenzyme is formed, which can initiate transcription.

The enzyme catalyses RNA(n) + a ribonucleoside 5'-triphosphate = RNA(n+1) + diphosphate. DNA-dependent RNA polymerase catalyzes the transcription of DNA into RNA using the four ribonucleoside triphosphates as substrates. This chain is DNA-directed RNA polymerase subunit alpha, found in Leuconostoc mesenteroides subsp. mesenteroides (strain ATCC 8293 / DSM 20343 / BCRC 11652 / CCM 1803 / JCM 6124 / NCDO 523 / NBRC 100496 / NCIMB 8023 / NCTC 12954 / NRRL B-1118 / 37Y).